Reading from the N-terminus, the 127-residue chain is DNA-directed RNA polymerase subunit omega (127 aa).

It belongs to the RNA polymerase subunit omega family. The RNAP catalytic core consists of 2 alpha, 1 beta, 1 beta' and 1 omega subunit. When a sigma factor is associated with the core the holoenzyme is formed, which can initiate transcription.

It carries out the reaction RNA(n) + a ribonucleoside 5'-triphosphate = RNA(n+1) + diphosphate. Its function is as follows. Promotes RNA polymerase assembly. Latches the N- and C-terminal regions of the beta' subunit thereby facilitating its interaction with the beta and alpha subunits. The polypeptide is DNA-directed RNA polymerase subunit omega (Rickettsia peacockii (strain Rustic)).